The sequence spans 571 residues: Septation ring formation regulator EzrA (571 aa).

Residues 1 to 3 (MYY) lie on the Extracellular side of the membrane. The helical transmembrane segment at 4–22 (MLIGFIIVVIAVISAGYIL) threads the bilayer. The Cytoplasmic portion of the chain corresponds to 23 to 571 (KRKHYQRINE…ESKVSVDDIE (549 aa)). Coiled-coil stretches lie at residues 170–215 (EAKL…QMER), 248–299 (LAQM…TLEH), 326–374 (DALA…ASGE), 400–437 (NFAEELRSLRKDELEARDDAERMRRAIITLDRKMERER), and 478–529 (RIAE…ENHF).

Belongs to the EzrA family.

Its subcellular location is the cell membrane. Its function is as follows. Negative regulator of FtsZ ring formation; modulates the frequency and position of FtsZ ring formation. Inhibits FtsZ ring formation at polar sites. Interacts either with FtsZ or with one of its binding partners to promote depolymerization. The polypeptide is Septation ring formation regulator EzrA (Listeria innocua serovar 6a (strain ATCC BAA-680 / CLIP 11262)).